Here is a 428-residue protein sequence, read N- to C-terminus: Nucleotidyltransferase MB21D2 (428 aa).

Residues 366–389 (QRRGSTTSIPSPQSDGGDPNQPDD) form a disordered region. The segment covering 368–379 (RGSTTSIPSPQS) has biased composition (polar residues). A Phosphothreonine modification is found at Thr372. Residues Ser373, Ser376, and Ser379 each carry the phosphoserine modification.

The protein belongs to the mab-21 family.

Functionally, probable nucleotidyltransferase that catalyzes the formation of cyclic dinucleotide second messenger in response to some unknown stimulus. This is Nucleotidyltransferase MB21D2 from Mus musculus (Mouse).